We begin with the raw amino-acid sequence, 349 residues long: Sensory histidine kinase/phosphatase NtrB (349 aa).

The 74-residue stretch at 5-78 (TLPDAGQILN…SLAAGQGFTD (74 aa)) folds into the PAS domain. Residues 136-349 (GLAHEIKNPL…EFSVYLPIRK (214 aa)) form the Histidine kinase domain. A Phosphohistidine; by autocatalysis modification is found at H139. Residue K329 participates in ATP binding.

Autophosphorylated.

The protein resides in the cytoplasm. The enzyme catalyses ATP + protein L-histidine = ADP + protein N-phospho-L-histidine.. Functionally, member of the two-component regulatory system NtrB/NtrC, which controls expression of the nitrogen-regulated (ntr) genes in response to nitrogen limitation. Under conditions of nitrogen limitation, NtrB autophosphorylates and transfers the phosphoryl group to NtrC. In the presence of nitrogen, acts as a phosphatase that dephosphorylates and inactivates NtrC. The sequence is that of Sensory histidine kinase/phosphatase NtrB (ntrB) from Klebsiella oxytoca.